The primary structure comprises 416 residues: Adenylosuccinate synthetase (416 aa).

GTP contacts are provided by residues 11–17 and 39–41; these read GDEGKGK and GHT. D12 (proton acceptor) is an active-site residue. Residues D12 and G39 each contribute to the Mg(2+) site. Residues 12–15, 37–40, T125, R139, Q214, T229, and R290 each bind IMP; these read DEGK and NAGH. The Proton donor role is filled by H40. 286 to 292 contributes to the substrate binding site; it reads TTTGRPR. GTP is bound by residues R292, 318–320, and 405–407; these read KLD and SLG.

This sequence belongs to the adenylosuccinate synthetase family. As to quaternary structure, homodimer. The cofactor is Mg(2+).

Its subcellular location is the cytoplasm. It carries out the reaction IMP + L-aspartate + GTP = N(6)-(1,2-dicarboxyethyl)-AMP + GDP + phosphate + 2 H(+). Its pathway is purine metabolism; AMP biosynthesis via de novo pathway; AMP from IMP: step 1/2. In terms of biological role, plays an important role in the de novo pathway of purine nucleotide biosynthesis. Catalyzes the first committed step in the biosynthesis of AMP from IMP. The polypeptide is Adenylosuccinate synthetase (Picrophilus torridus (strain ATCC 700027 / DSM 9790 / JCM 10055 / NBRC 100828 / KAW 2/3)).